The chain runs to 58 residues: uncharacterized protein (58 aa).

This is an uncharacterized protein from Archaeoglobus fulgidus (strain ATCC 49558 / DSM 4304 / JCM 9628 / NBRC 100126 / VC-16).